The chain runs to 290 residues: Porphobilinogen deaminase (290 aa).

At Cys237 the chain carries S-(dipyrrolylmethanemethyl)cysteine.

This sequence belongs to the HMBS family. Monomer. Dipyrromethane serves as cofactor.

The enzyme catalyses 4 porphobilinogen + H2O = hydroxymethylbilane + 4 NH4(+). It functions in the pathway porphyrin-containing compound metabolism; protoporphyrin-IX biosynthesis; coproporphyrinogen-III from 5-aminolevulinate: step 2/4. Its function is as follows. Tetrapolymerization of the monopyrrole PBG into the hydroxymethylbilane pre-uroporphyrinogen in several discrete steps. The protein is Porphobilinogen deaminase of Clostridium kluyveri (strain NBRC 12016).